The following is a 306-amino-acid chain: Peroxisome biogenesis factor 2 (306 aa).

At 1–15 (MAASENNMEEINPVL) the chain is on the peroxisomal matrix side. A helical transmembrane segment spans residues 16–42 (RISQLDAIELNKALEQLIWSQFSSCFQ). Residues 43–48 (GFKPGL) are Cytoplasmic-facing. Residues 49–74 (LTRFEPEIKASLCLFLWRYTIYTKNA) form a helical membrane-spanning segment. Topologically, residues 75–98 (TVGQTILNMQYKNDLAVTKKYRPL) are peroxisomal matrix. A helical transmembrane segment spans residues 99–125 (NKQQKVWFALFLVGGKWLEERSFDLFS). The Cytoplasmic segment spans residues 126–134 (NHPFGASFQ). Residues 135-161 (RTKYFLNAISGLLKFGALLNFLIFLQQ) form a helical membrane-spanning segment. The Peroxisomal matrix segment spans residues 162 to 188 (GKFATLTERLLGIRSVFSRPQDVRQVG). The chain crosses the membrane as a helical span at residues 189–212 (FEYMNREILWHGFAEFLIFLLPLI). The Cytoplasmic portion of the chain corresponds to 213–306 (NTQKLKSKLF…KIEISEVHTL (94 aa)). Zn(2+)-binding residues include Cys245, Cys248, Cys260, His262, Cys265, Cys268, Cys281, and Cys284. The RING-type zinc-finger motif lies at 245–285 (CCLCGEWPAMPHTIGCSHVFCYYCIKSNYMSDMYFTCPKCS).

Belongs to the pex2/pex10/pex12 family. In terms of assembly, component of the PEX2-PEX10-PEX12 retrotranslocation channel.

Its subcellular location is the peroxisome membrane. It catalyses the reaction [E2 ubiquitin-conjugating enzyme]-S-ubiquitinyl-L-cysteine + [acceptor protein]-L-cysteine = [E2 ubiquitin-conjugating enzyme]-L-cysteine + [acceptor protein]-S-ubiquitinyl-L-cysteine.. It carries out the reaction S-ubiquitinyl-[E2 ubiquitin-conjugating enzyme]-L-cysteine + [acceptor protein]-L-lysine = [E2 ubiquitin-conjugating enzyme]-L-cysteine + N(6)-ubiquitinyl-[acceptor protein]-L-lysine.. It participates in protein modification; protein ubiquitination. Functionally, E3 ubiquitin-protein ligase component of a retrotranslocation channel required for peroxisome organization by mediating export of the PEX5 receptor from peroxisomes to the cytosol, thereby promoting PEX5 recycling. The retrotranslocation channel is composed of PEX2, PEX10 and PEX12; each subunit contributing transmembrane segments that coassemble into an open channel that specifically allows the passage of PEX5 through the peroxisomal membrane. PEX2 also regulates peroxisome organization by acting as a E3 ubiquitin-protein ligase. The chain is Peroxisome biogenesis factor 2 from Xenopus laevis (African clawed frog).